The sequence spans 136 residues: Aspartate 1-decarboxylase (136 aa).

The active-site Schiff-base intermediate with substrate; via pyruvic acid is S25. Position 25 is a pyruvic acid (Ser) (S25). T57 is a binding site for substrate. Residue Y58 is the Proton donor of the active site. 73–75 provides a ligand contact to substrate; sequence GAA.

The protein belongs to the PanD family. In terms of assembly, heterooctamer of four alpha and four beta subunits. Pyruvate is required as a cofactor. In terms of processing, is synthesized initially as an inactive proenzyme, which is activated by self-cleavage at a specific serine bond to produce a beta-subunit with a hydroxyl group at its C-terminus and an alpha-subunit with a pyruvoyl group at its N-terminus.

The protein localises to the cytoplasm. The catalysed reaction is L-aspartate + H(+) = beta-alanine + CO2. Its pathway is cofactor biosynthesis; (R)-pantothenate biosynthesis; beta-alanine from L-aspartate: step 1/1. In terms of biological role, catalyzes the pyruvoyl-dependent decarboxylation of aspartate to produce beta-alanine. This is Aspartate 1-decarboxylase from Corynebacterium efficiens (strain DSM 44549 / YS-314 / AJ 12310 / JCM 11189 / NBRC 100395).